We begin with the raw amino-acid sequence, 94 residues long: Small nuclear ribonucleoprotein E (94 aa).

One can recognise a Sm domain in the interval 14–94 (INCIFNFLQQ…DNITLITSAD (81 aa)).

It belongs to the snRNP Sm proteins family. In terms of assembly, component of the Sm core complex, present in spliceosomal snRNP U1, U2, U4/U6 and U5. The core complex contains SMB1, SMD1, SMD2, SMD3, SME1, SMX3 and SMX2 (Sm proteins B, D1, D2, D3, E, F and G, respectively), and is probably a heptameric ring structure. SME1 specifically interacts with SMX2 and SMX3. Component of the U4/U6-U5 tri-snRNP complex composed of the U4, U6 and U5 snRNAs and at least PRP3, PRP4, PRP6, PRP8, PRP18, PRP31, PRP38, SNU13, SNU23, SNU66, SNU114, SPP381, SMB1, SMD1, SMD2, SMD3, SMX2, SMX3, LSM2, LSM3, LSM4, LSM5, LSM6, LSM7, LSM8, BRR2 and DIB1.

The protein localises to the cytoplasm. Its subcellular location is the nucleus. In terms of biological role, involved in pre-mRNA splicing. Binds and is required for the stability of snRNA U1, U2, U4 and U5 which contain a highly conserved structural motif called the Sm binding site. Involved in cap modification. The protein is Small nuclear ribonucleoprotein E (SME1) of Saccharomyces cerevisiae (strain ATCC 204508 / S288c) (Baker's yeast).